The sequence spans 390 residues: RNA-binding motif protein, X chromosome (390 aa).

Methionine 1 bears the N-acetylmethionine; in Heterogeneous nuclear ribonucleoprotein G; alternate mark. An N-acetylvaline; in Heterogeneous nuclear ribonucleoprotein G, N-terminally processed modification is found at valine 2. The region spanning 8-86 (GKLFIGGLNT…KAIKVEQATK (79 aa)) is the RRM domain. Lysine 22 participates in a covalent cross-link: Glycyl lysine isopeptide (Lys-Gly) (interchain with G-Cter in SUMO2). Lysine 30 is modified (N6-acetyllysine). Residues 58 to 390 (SPADAKDAAR…RSDRGGRSRY (333 aa)) form a disordered region. Positions 60–80 (ADAKDAARDMNGKSLDGKAIK) are enriched in basic and acidic residues. Glycyl lysine isopeptide (Lys-Gly) (interchain with G-Cter in SUMO2) cross-links involve residues lysine 80 and lysine 86. Phosphoserine is present on residues serine 88 and serine 91. A compositionally biased stretch (gly residues) spans 109–120 (LRGGRGGSGGTR). Residues arginine 125, arginine 144, and arginine 164 each carry the omega-N-methylarginine modification. Pro residues predominate over residues 151 to 164 (RGPPPRSGGPPPKR). A Phosphoserine modification is found at serine 165. The residue at position 172 (arginine 172) is an Omega-N-methylarginine. Serine 174 bears the Phosphoserine mark. 2 stretches are compositionally biased toward basic and acidic residues: residues 194–215 (PRREPLPSRRDVYLSPRDDGYS) and 241–274 (YTYRDYGHSSSRDDYPSRGYSDRDGYGRERDYSD). Residues serine 261, serine 329, serine 330, and serine 332 each carry the phosphoserine modification. Residues 323–337 (SRDSYTSSRSDLYSS) show a composition bias toward low complexity. Basic and acidic residues predominate over residues 338-347 (GRDRVGRQER). Position 352 is a phosphoserine (serine 352). Low complexity predominate over residues 362–371 (DSYSSSSRGA). Positions 380–390 (SRSDRGGRSRY) are enriched in basic and acidic residues.

Homomultimer. Found in the supraspliceosome complex Identified in the spliceosome C complex. Interacts with KHDRBS3. Forms a complex with ILF2, ILF3, YLPM1, KHDRBS1, NCOA5 and PPP1CA. Interacts with SAFB/SAFB1. Interacts with ERAP1; the interaction is RNA-independent. Interacts with CLK2, KHDRBS2, SAFB, TRA2B and YTHDC1. Interacts with PPIA/CYPA. O-glycosylated. Post-translationally, arg-182 is dimethylated, probably to asymmetric dimethylarginine. In terms of tissue distribution, expressed in brain, spleen, lung, liver, kidney, testis and heart. Weakly expressed in skeletal muscle (at protein level).

It localises to the nucleus. In terms of biological role, RNA-binding protein that plays several role in the regulation of pre- and post-transcriptional processes. Implicated in tissue-specific regulation of gene transcription and alternative splicing of several pre-mRNAs. Binds to and stimulates transcription from the tumor suppressor TXNIP gene promoter; may thus be involved in tumor suppression. When associated with SAFB, binds to and stimulates transcription from the SREBF1 promoter. Associates with nascent mRNAs transcribed by RNA polymerase II. Component of the supraspliceosome complex that regulates pre-mRNA alternative splice site selection. Can either activate or suppress exon inclusion; acts additively with TRA2B to promote exon 7 inclusion of the survival motor neuron SMN. Represses the splicing of MAPT/Tau exon 10. Binds preferentially to single-stranded 5'-CC[A/C]-rich RNA sequence motifs localized in a single-stranded conformation; probably binds RNA as a homodimer. Binds non-specifically to pre-mRNAs. Also plays a role in the cytoplasmic TNFR1 trafficking pathways; promotes both the IL-1-beta-mediated inducible proteolytic cleavage of TNFR1 ectodomains and the release of TNFR1 exosome-like vesicles to the extracellular compartment. The protein is RNA-binding motif protein, X chromosome (Rbmx) of Rattus norvegicus (Rat).